A 570-amino-acid polypeptide reads, in one-letter code: E3 ubiquitin-protein ligase ZFP91 (570 aa).

Residues 1-12 show a composition bias toward basic and acidic residues; sequence MPGETEEPRPPE. A disordered region spans residues 1–306; the sequence is MPGETEEPRP…PRLPKRRKKP (306 aa). Composition is skewed to low complexity over residues 31 to 43 and 59 to 68; these read QRPPEAVAAAPAG and AAAAAAAAAV. Residues 69 to 82 show a composition bias toward basic residues; it reads SRRRKAEYPRRRRS. Phosphoserine occurs at positions 83 and 103. The segment covering 94–104 has biased composition (polar residues); the sequence is QQPQAAKSPSP. Positions 119-128 are enriched in basic and acidic residues; sequence VTTDKDPKEE. Acidic residues predominate over residues 207–223; that stretch reads SEEEEEEEEEMLISEEE. 2 stretches are compositionally biased toward basic and acidic residues: residues 224–245 and 252–269; these read IPFKDDPRDETYKPHLERETPK and KVKEEKEKKEIKVEVEVE. Over residues 270–282 the composition is skewed to acidic residues; that stretch reads VKEEENEIREDEE. C2H2-type zinc fingers lie at residues 311-336, 342-366, 372-394, 400-422, and 430-453; these read VRCEMEGCGTVLAHPRYLQHHIKYQH, YVCPHPSCGRLFRLQKQLLRHAKHH, YICEYCARAFKSSHNLAVHRMIH, LQCEICGFTCRQKASLNWHMKKH, and FSCNICGKKFEKKDSVVAHKAKSH. An interaction with MAP3K14/NIK region spans residues 338–368; it reads LKKKYVCPHPSCGRLFRLQKQLLRHAKHHTD.

Belongs to the krueppel C2H2-type zinc-finger protein family. As to quaternary structure, interacts with MAP3K14/NIK. In terms of tissue distribution, expressed ubiquitously, particularly at high level in testis. Isoform 2 is testis specific.

It is found in the nucleus. The enzyme catalyses S-ubiquitinyl-[E2 ubiquitin-conjugating enzyme]-L-cysteine + [acceptor protein]-L-lysine = [E2 ubiquitin-conjugating enzyme]-L-cysteine + N(6)-ubiquitinyl-[acceptor protein]-L-lysine.. Its pathway is protein modification; protein ubiquitination. Atypical E3 ubiquitin-protein ligase that mediates 'Lys-63'-linked ubiquitination of MAP3K14/NIK, leading to stabilize and activate MAP3K14/NIK. It thereby acts as an activator of the non-canonical NF-kappa-B2/NFKB2 pathway. May also play an important role in cell proliferation and/or anti-apoptosis. The sequence is that of E3 ubiquitin-protein ligase ZFP91 (ZFP91) from Homo sapiens (Human).